The sequence spans 198 residues: Fucoxanthin-chlorophyll a-c binding protein B, chloroplastic (198 aa).

The transit peptide at Met-1–Met-31 directs the protein to the chloroplast. The next 3 helical transmembrane spans lie at Ile-73–Ile-94, Ile-114–Met-134, and Gly-174–Pro-196.

Belongs to the fucoxanthin chlorophyll protein family. The LHC complex of chromophytic algae is composed of fucoxanthin, chlorophyll A and C bound non-covalently by fucoxanthin chlorophyll proteins (FCPs). The ratio of the pigments in LHC; fucoxanthin: chlorophyll C: chlorophyll A; (0.6-1): (0.1-0.3): (1).

Its subcellular location is the plastid. The protein resides in the chloroplast thylakoid membrane. Functionally, the light-harvesting complex (LHC) functions as a light receptor, it captures and delivers excitation energy to photosystems with which it is closely associated. Energy is transferred from the carotenoid and chlorophyll C (or B) to chlorophyll A and the photosynthetic reaction centers where it is used to synthesize ATP and reducing power. In Phaeodactylum tricornutum (Diatom), this protein is Fucoxanthin-chlorophyll a-c binding protein B, chloroplastic (FCPB).